Here is a 1410-residue protein sequence, read N- to C-terminus: Ribosome-binding protein 1 (1410 aa).

At 1–7 (MDIYDTQ) the chain is on the lumenal side. Residues 8–28 (TLGVVVFGGFMVVSAIGIFLV) traverse the membrane as a helical segment. Residues 29–1410 (STFSMKETSY…GSSSKEGTSV (1382 aa)) lie on the Cytoplasmic side of the membrane. Disordered stretches follow at residues 44 to 90 (NQRK…DPAP) and 129 to 152 (QEKL…VEPA). Positions 52–63 (THHQKVEKKKKE) are enriched in basic residues. The segment covering 64-88 (KTVEKKGKTKKKEEKPNGKIPDHDP) has biased composition (basic and acidic residues). Residue Lys148 forms a Glycyl lysine isopeptide (Lys-Gly) (interchain with G-Cter in SUMO2) linkage. A phosphoserine mark is found at Ser159 and Ser165. 2 disordered regions span residues 173 to 648 (APKE…PLYL) and 895 to 925 (QSSH…LQSS). Polar residues-rich tracts occupy residues 191–209 (TPAT…QNQS) and 225–238 (TPNQ…TPNQ). Repeat copies occupy residues 197 to 206 (TQGKKAEGTQ), 207 to 216 (NQSKKAEGAP), 217 to 226 (NQGRKAEGTP), 227 to 236 (NQGKKTEGTP), 237 to 246 (NQGKKAEGTP), 247 to 256 (NQGKKAEGTP), 257 to 266 (NQGKKAEGAQ), 267 to 276 (NQGKKVDTTP), 277 to 286 (NQGKKVEGAP), 287 to 296 (TQGRKAEGAQ), 297 to 306 (NQAKKVEGAQ), 307 to 316 (NQGKKAEGAQ), 317 to 326 (NQGKKGEGAQ), 327 to 336 (NQGKKAEGAQ), 337 to 346 (NQGKKAEGAQ), 347 to 356 (NQGKKAEGAQ), 357 to 366 (NQGKKAEGAQ), 367 to 376 (NQGKKAEGAQ), 377 to 386 (NQGKKAEGAQ), 387 to 396 (NQGKKVEGAQ), 397 to 406 (NQGKKAEGAQ), 407 to 416 (NQGKKAEGAQ), 417 to 426 (NQGKKAEGAQ), 427 to 436 (NQGKKAEGAQ), 437 to 446 (NQGKKAEGAQ), 447 to 456 (NQGKKAEGAQ), 457 to 466 (NQGKKAEGAQ), 467 to 476 (NQGKKVEGAQ), 477 to 486 (NQGKKAEGAQ), 487 to 496 (NQGKKAEGAQ), 497 to 506 (NQGKKAEGAQ), 507 to 516 (NQGQKGEGAQ), and 517 to 526 (NQGKKTEGAQ). The 41 X 10 AA approximate tandem repeats of [TN]-Q-[GSA]-[KRQT]-K-[ATGSV]-[ED]-[GTAS]-[ATIS]-[PQTAS] stretch occupies residues 197-604 (TQGKKAEGTQ…NQGKKTESAS (408 aa)). Phosphothreonine occurs at positions 225, 235, 245, and 255. 2 stretches are compositionally biased toward polar residues: residues 265–278 (AQNQ…TPNQ) and 295–519 (AQNQ…QNQG). Residues 520–532 (KKTEGAQGKKAER) show a composition bias toward basic and acidic residues. Residues 527 to 534 (GKKAERSP) form a 34; approximate repeat. Residue Ser533 is modified to Phosphoserine. Copy 35 of the repeat occupies 535–544 (NQGKKGEGAP). A 36; approximate repeat occupies 545 to 554 (IQGKKADSVA). Over residues 553–567 (VANQGTKVEGITNQG) the composition is skewed to polar residues. 2 tandem repeats follow at residues 555-564 (NQGTKVEGIT) and 565-574 (NQGKKAEGSP). Residues 568 to 581 (KKAEGSPSEGKKAE) are compositionally biased toward basic and acidic residues. Phosphoserine occurs at positions 573 and 583. The 39; approximate repeat unit spans residues 575 to 584 (SEGKKAEGSP). 2 repeat units span residues 585-594 (NQGKKADAAA) and 595-604 (NQGKKTESAS). Positions 602–612 (SASVQGRNTDV) are enriched in polar residues. Ser615 is modified (phosphoserine). Lys620 participates in a covalent cross-link: Glycyl lysine isopeptide (Lys-Gly) (interchain with G-Cter in SUMO1). Ser900 carries the post-translational modification Phosphoserine. N6-acetyllysine is present on Lys932. 2 positions are modified to phosphoserine: Ser959 and Ser978. 4 disordered regions span residues 1093 to 1122 (GPTL…ETQS), 1260 to 1287 (EMKS…EQDP), 1330 to 1362 (EKLR…LTSD), and 1378 to 1410 (QEQL…GTSV). A phosphoserine mark is found at Ser1276 and Ser1277. Composition is skewed to basic and acidic residues over residues 1347–1360 (SQLK…KKLT) and 1381–1403 (LARE…DGSS).

It is found in the endoplasmic reticulum membrane. Functionally, acts as a ribosome receptor and mediates interaction between the ribosome and the endoplasmic reticulum membrane. The protein is Ribosome-binding protein 1 (RRBP1) of Homo sapiens (Human).